The sequence spans 167 residues: 2-C-methyl-D-erythritol 2,4-cyclodiphosphate synthase (167 aa).

A divalent metal cation is bound by residues Asp10 and His12. Residues 10–12 (DVH) and 36–37 (HS) contribute to the 4-CDP-2-C-methyl-D-erythritol 2-phosphate site. His44 provides a ligand contact to a divalent metal cation. 4-CDP-2-C-methyl-D-erythritol 2-phosphate-binding positions include 58-60 (NIG), 63-67 (FPNTN), 134-137 (TTSE), Phe141, and Arg144.

The protein belongs to the IspF family. Homotrimer. It depends on a divalent metal cation as a cofactor.

It catalyses the reaction 4-CDP-2-C-methyl-D-erythritol 2-phosphate = 2-C-methyl-D-erythritol 2,4-cyclic diphosphate + CMP. Its pathway is isoprenoid biosynthesis; isopentenyl diphosphate biosynthesis via DXP pathway; isopentenyl diphosphate from 1-deoxy-D-xylulose 5-phosphate: step 4/6. In terms of biological role, involved in the biosynthesis of isopentenyl diphosphate (IPP) and dimethylallyl diphosphate (DMAPP), two major building blocks of isoprenoid compounds. Catalyzes the conversion of 4-diphosphocytidyl-2-C-methyl-D-erythritol 2-phosphate (CDP-ME2P) to 2-C-methyl-D-erythritol 2,4-cyclodiphosphate (ME-CPP) with a corresponding release of cytidine 5-monophosphate (CMP). The polypeptide is 2-C-methyl-D-erythritol 2,4-cyclodiphosphate synthase (Azobacteroides pseudotrichonymphae genomovar. CFP2).